The primary structure comprises 447 residues: Tubulin beta-2 chain (447 aa).

8 residues coordinate GTP: Gln-11, Glu-69, Ser-138, Gly-142, Thr-143, Gly-144, Asn-204, and Asn-226. A Mg(2+)-binding site is contributed by Glu-69. Residues 427 to 447 are disordered; that stretch reads DASISEGEEEYEEEQQLENEE. Acidic residues predominate over residues 432 to 447; the sequence is EGEEEYEEEQQLENEE.

It belongs to the tubulin family. As to quaternary structure, dimer of alpha and beta chains. A typical microtubule is a hollow water-filled tube with an outer diameter of 25 nm and an inner diameter of 15 nM. Alpha-beta heterodimers associate head-to-tail to form protofilaments running lengthwise along the microtubule wall with the beta-tubulin subunit facing the microtubule plus end conferring a structural polarity. Microtubules usually have 13 protofilaments but different protofilament numbers can be found in some organisms and specialized cells. Mg(2+) is required as a cofactor.

It is found in the cytoplasm. The protein resides in the cytoskeleton. Tubulin is the major constituent of microtubules, a cylinder consisting of laterally associated linear protofilaments composed of alpha- and beta-tubulin heterodimers. Microtubules grow by the addition of GTP-tubulin dimers to the microtubule end, where a stabilizing cap forms. Below the cap, tubulin dimers are in GDP-bound state, owing to GTPase activity of alpha-tubulin. The sequence is that of Tubulin beta-2 chain (TUB2) from Erysiphe pisi (Pea powdery mildew).